Here is a 109-residue protein sequence, read N- to C-terminus: T-cell surface glycoprotein CD1b (109 aa).

The N-terminal stretch at 1-18 (MLLLPLLLLAGRFPGGDN) is a signal peptide. N-linked (GlcNAc...) asparagine glycosylation is found at asparagine 38 and asparagine 75.

Heterodimer with B2M (beta-2-microglobulin). Interacts with saposin C. In terms of tissue distribution, expressed on cortical thymocytes, on certain T-cell leukemias, and in various other tissues.

It is found in the cell membrane. The protein resides in the endosome membrane. Its subcellular location is the lysosome membrane. Functionally, antigen-presenting protein that binds self and non-self lipid and glycolipid antigens and presents them to T-cell receptors on natural killer T-cells. This Oryctolagus cuniculus (Rabbit) protein is T-cell surface glycoprotein CD1b (CD1B).